The sequence spans 258 residues: Regulatory protein RecX (258 aa).

This sequence belongs to the RecX family.

The protein localises to the cytoplasm. Functionally, modulates RecA activity. The sequence is that of Regulatory protein RecX from Streptococcus pneumoniae (strain 70585).